A 618-amino-acid chain; its full sequence is Proline--tRNA ligase (618 aa).

Belongs to the class-II aminoacyl-tRNA synthetase family. ProS type 1 subfamily. Homodimer.

It is found in the cytoplasm. It catalyses the reaction tRNA(Pro) + L-proline + ATP = L-prolyl-tRNA(Pro) + AMP + diphosphate. Functionally, catalyzes the attachment of proline to tRNA(Pro) in a two-step reaction: proline is first activated by ATP to form Pro-AMP and then transferred to the acceptor end of tRNA(Pro). As ProRS can inadvertently accommodate and process non-cognate amino acids such as alanine and cysteine, to avoid such errors it has two additional distinct editing activities against alanine. One activity is designated as 'pretransfer' editing and involves the tRNA(Pro)-independent hydrolysis of activated Ala-AMP. The other activity is designated 'posttransfer' editing and involves deacylation of mischarged Ala-tRNA(Pro). The misacylated Cys-tRNA(Pro) is not edited by ProRS. The protein is Proline--tRNA ligase of Streptococcus equi subsp. zooepidemicus (strain H70).